Here is a 113-residue protein sequence, read N- to C-terminus: Iron-sulfur cluster insertion protein ErpA (113 aa).

Cys41, Cys105, and Cys107 together coordinate iron-sulfur cluster.

The protein belongs to the HesB/IscA family. As to quaternary structure, homodimer. The cofactor is iron-sulfur cluster.

Its function is as follows. Required for insertion of 4Fe-4S clusters for at least IspG. The polypeptide is Iron-sulfur cluster insertion protein ErpA (Actinobacillus pleuropneumoniae serotype 5b (strain L20)).